Here is a 243-residue protein sequence, read N- to C-terminus: Pyridoxine 5'-phosphate synthase (243 aa).

Asn9 is a binding site for 3-amino-2-oxopropyl phosphate. Residue 11 to 12 (DH) participates in 1-deoxy-D-xylulose 5-phosphate binding. Arg20 contacts 3-amino-2-oxopropyl phosphate. The Proton acceptor role is filled by His45. 1-deoxy-D-xylulose 5-phosphate contacts are provided by Arg47 and His52. The active-site Proton acceptor is the Glu72. Thr102 lines the 1-deoxy-D-xylulose 5-phosphate pocket. Residue His193 is the Proton donor of the active site. 3-amino-2-oxopropyl phosphate-binding positions include Gly194 and 215–216 (GH).

This sequence belongs to the PNP synthase family. In terms of assembly, homooctamer; tetramer of dimers.

It localises to the cytoplasm. The enzyme catalyses 3-amino-2-oxopropyl phosphate + 1-deoxy-D-xylulose 5-phosphate = pyridoxine 5'-phosphate + phosphate + 2 H2O + H(+). It functions in the pathway cofactor biosynthesis; pyridoxine 5'-phosphate biosynthesis; pyridoxine 5'-phosphate from D-erythrose 4-phosphate: step 5/5. Its function is as follows. Catalyzes the complicated ring closure reaction between the two acyclic compounds 1-deoxy-D-xylulose-5-phosphate (DXP) and 3-amino-2-oxopropyl phosphate (1-amino-acetone-3-phosphate or AAP) to form pyridoxine 5'-phosphate (PNP) and inorganic phosphate. This is Pyridoxine 5'-phosphate synthase from Salmonella typhimurium (strain LT2 / SGSC1412 / ATCC 700720).